Here is a 414-residue protein sequence, read N- to C-terminus: TAR DNA-binding protein 43 (414 aa).

Residues K79, K84, K95, K102, and K181 each participate in a glycyl lysine isopeptide (Lys-Gly) (interchain with G-Cter in SUMO2) cross-link. RRM domains are found at residues S104–E200 and R191–P262. The residue at position 183 (S183) is a Phosphoserine. The interaction with UBQLN2 stretch occupies residues D216–M414. Residues E261–G274 are compositionally biased toward basic and acidic residues. 2 disordered regions span residues E261–Q303 and A341–S373. K263 is covalently cross-linked (Glycyl lysine isopeptide (Lys-Gly) (interchain with G-Cter in SUMO2)). Residues R275–Q303 are compositionally biased toward gly residues. The residue at position 292 (S292) is a Phosphoserine. R293 carries the omega-N-methylarginine modification. Low complexity predominate over residues S342 to N358.

Monomer and component of the SFPQ-NONO complex, which is probably a heterotetramer of two 52 kDa (NONO) and two 100 kDa (SFPQ) subunits. NONO is a component of spliceosome and U5.4/6 snRNP complexes. Interacts with CPNE4 (via VWFA domain). Forms heterodimers with PSPC1; this involves formation of a coiled coil domain by helices from both proteins. Part of complex consisting of SFPQ, NONO and MATR3. Part of a complex consisting of SFPQ, NONO and NR5A1. Part of a complex consisting of SFPQ, NONO and TOP1. Interacts with SPI1. Interacts with RNF43. Interacts with PER1 and PER2. Part of the HDP-RNP complex composed of at least HEXIM1, PRKDC, XRCC5, XRCC6, paraspeckle proteins (SFPQ, NONO, PSPC1, RBM14, and MATR3) and NEAT1 RNA. Interacts (via second RRM domain) with WASL; the interaction is direct. Component of a multiprotein complex with WASL and SFPQ. Interacts with ERCC6. Interacts (via DNA-binding domain) with TET1. In terms of processing, hyperphosphorylated. Post-translationally, ubiquitinated.

It localises to the nucleus. Its subcellular location is the nucleolus. It is found in the nucleus speckle. The protein resides in the chromosome. The protein localises to the mitochondrion. In terms of biological role, DNA- and RNA binding protein, involved in several nuclear processes. Binds the conventional octamer sequence in double-stranded DNA. Also binds single-stranded DNA and RNA at a site independent of the duplex site. Involved in pre-mRNA splicing, probably as a heterodimer with SFPQ. Interacts with U5 snRNA, probably by binding to a purine-rich sequence located on the 3' side of U5 snRNA stem 1b. Together with PSPC1, required for the formation of nuclear paraspeckles. The SFPQ-NONO heteromer associated with MATR3 may play a role in nuclear retention of defective RNAs. The SFPQ-NONO heteromer may be involved in DNA unwinding by modulating the function of topoisomerase I/TOP1. The SFPQ-NONO heteromer may be involved in DNA non-homologous end joining (NHEJ) required for double-strand break repair and V(D)J recombination and may stabilize paired DNA ends. In vitro, the complex strongly stimulates DNA end joining, binds directly to the DNA substrates and cooperates with the Ku70/G22P1-Ku80/XRCC5 (Ku) dimer to establish a functional preligation complex. NONO is involved in transcriptional regulation. The SFPQ-NONO-NR5A1 complex binds to the CYP17 promoter and regulates basal and cAMP-dependent transcriptional activity. NONO binds to an enhancer element in long terminal repeats of endogenous intracisternal A particles (IAPs) and activates transcription. Regulates the circadian clock by repressing the transcriptional activator activity of the CLOCK-BMAL1 heterodimer. Important for the functional organization of GABAergic synapses. Plays a specific and important role in the regulation of synaptic RNAs and GPHN/gephyrin scaffold structure, through the regulation of GABRA2 transcript. Plays a key role during neuronal differentiation by recruiting TET1 to genomic loci and thereby regulating 5-hydroxymethylcytosine levels. Plays a role in the regulation of DNA virus-mediated innate immune response by assembling into the HDP-RNP complex, a complex that serves as a platform for IRF3 phosphorylation and subsequent innate immune response activation through the cGAS-STING pathway. This chain is TAR DNA-binding protein 43 (TARDBP), found in Pongo abelii (Sumatran orangutan).